The sequence spans 436 residues: Trigger factor (436 aa).

The PPIase FKBP-type domain maps to 163–248 (GDRVTLDFAG…VKEVAEGVLP (86 aa)).

It belongs to the FKBP-type PPIase family. Tig subfamily.

The protein localises to the cytoplasm. The enzyme catalyses [protein]-peptidylproline (omega=180) = [protein]-peptidylproline (omega=0). In terms of biological role, involved in protein export. Acts as a chaperone by maintaining the newly synthesized protein in an open conformation. Functions as a peptidyl-prolyl cis-trans isomerase. The protein is Trigger factor of Bordetella petrii (strain ATCC BAA-461 / DSM 12804 / CCUG 43448).